A 179-amino-acid chain; its full sequence is Probable chorismate pyruvate-lyase (179 aa).

3 residues coordinate substrate: Arg82, Leu120, and Glu165.

It belongs to the UbiC family.

The protein localises to the cytoplasm. The enzyme catalyses chorismate = 4-hydroxybenzoate + pyruvate. The protein operates within cofactor biosynthesis; ubiquinone biosynthesis. Functionally, removes the pyruvyl group from chorismate, with concomitant aromatization of the ring, to provide 4-hydroxybenzoate (4HB) for the ubiquinone pathway. The chain is Probable chorismate pyruvate-lyase from Vibrio vulnificus (strain YJ016).